Here is a 122-residue protein sequence, read N- to C-terminus: uncharacterized protein (122 aa).

This is an uncharacterized protein from Saccharomyces cerevisiae (strain ATCC 204508 / S288c) (Baker's yeast).